A 1409-amino-acid chain; its full sequence is L-2-aminoadipate reductase large subunit (1409 aa).

Positions 858–937 (QALSETEQTL…GFASEIDRLL (80 aa)) constitute a Carrier domain. Ser896 carries the O-(pantetheine 4'-phosphoryl)serine modification.

This sequence belongs to the ATP-dependent AMP-binding enzyme family. As to quaternary structure, heterodimer of an alpha and a beta subunit. The cofactor is pantetheine 4'-phosphate.

The catalysed reaction is (S)-2-amino-6-oxohexanoate + NADP(+) + H2O = L-2-aminoadipate + NADPH + 2 H(+). It carries out the reaction (S)-2-amino-6-oxohexanoate + NAD(+) + H2O = L-2-aminoadipate + NADH + 2 H(+). The enzyme catalyses (S)-2-amino-6-oxohexanoate + AMP + diphosphate + NADP(+) = L-2-aminoadipate + ATP + NADPH + H(+). It functions in the pathway amino-acid biosynthesis; L-lysine biosynthesis via AAA pathway; L-lysine from L-alpha-aminoadipate (fungal route): step 1/3. Its function is as follows. Catalyzes the activation of alpha-aminoadipate by ATP-dependent adenylation and the reduction of activated alpha-aminoadipate by NADPH. The activated alpha-aminoadipate is bound to the phosphopantheinyl group of the enzyme itself before it is reduced to (S)-2-amino-6-oxohexanoate. The protein is L-2-aminoadipate reductase large subunit (lys2) of Penicillium chrysogenum (Penicillium notatum).